Consider the following 753-residue polypeptide: Neuroendocrine convertase 1 (753 aa).

An N-terminal signal peptide occupies residues 1–27; that stretch reads MEQRGWTLQCTAFAFFCVWCALNSVKA. Residues 28–110 constitute a propeptide that is removed on maturation; it reads KRQFVNEWAA…QQYEKERSKR (83 aa). The 322-residue stretch at 129–450 folds into the Peptidase S8 domain; it reads QWYLQDTRMT…FGLLNAKALV (322 aa). Active-site charge relay system residues include D167 and H208. Disulfide bonds link C225/C374 and C317/C347. The active-site Charge relay system is S382. An N-linked (GlcNAc...) asparagine glycan is attached at N401. Residues 460-597 enclose the P/Homo B domain; the sequence is NVPEKKECVV…KLILHGTSSQ (138 aa). Cysteines 467 and 494 form a disulfide. The segment covering 633 to 651 has biased composition (polar residues); the sequence is QKSLNGNLLVPKNSSSSNV. Positions 633-663 are disordered; that stretch reads QKSLNGNLLVPKNSSSSNVEGRRDEQVQGTP. N-linked (GlcNAc...) asparagine glycosylation is present at N645.

Belongs to the peptidase S8 family. Furin subfamily. The cofactor is Ca(2+).

The protein localises to the cytoplasmic vesicle. Its subcellular location is the secretory vesicle. The catalysed reaction is Release of protein hormones, neuropeptides and renin from their precursors, generally by hydrolysis of -Lys-Arg-|- bonds.. Functionally, involved in the processing of hormone and other protein precursors at sites comprised of pairs of basic amino acid residues. Substrates include POMC, renin, enkephalin, dynorphin, somatostatin, insulin and AGRP. This Mus musculus (Mouse) protein is Neuroendocrine convertase 1 (Pcsk1).